The sequence spans 396 residues: Tryptophan synthase beta chain (396 aa).

The residue at position 86 (Lys-86) is an N6-(pyridoxal phosphate)lysine.

This sequence belongs to the TrpB family. Tetramer of two alpha and two beta chains. It depends on pyridoxal 5'-phosphate as a cofactor.

The enzyme catalyses (1S,2R)-1-C-(indol-3-yl)glycerol 3-phosphate + L-serine = D-glyceraldehyde 3-phosphate + L-tryptophan + H2O. The protein operates within amino-acid biosynthesis; L-tryptophan biosynthesis; L-tryptophan from chorismate: step 5/5. The beta subunit is responsible for the synthesis of L-tryptophan from indole and L-serine. The chain is Tryptophan synthase beta chain from Serratia proteamaculans (strain 568).